Reading from the N-terminus, the 241-residue chain is B9 domain-containing protein 1 (241 aa).

Residues Met1 to Asn42 form a disordered region. The segment covering Glu20–Arg34 has biased composition (basic residues). Residues Phe53–Glu197 enclose the C2 B9-type domain.

Belongs to the B9D family. As to quaternary structure, probable component of the tectonic-like complex (also named MKS complex), composed of B9d1, B9d2, Cc2d2a, Mks1 and tctn. In terms of tissue distribution, expressed in type I sensory neurons (at protein level). Expressed in spermatids and spermatocytes (at protein level).

Its subcellular location is the cytoplasm. It localises to the cytoskeleton. The protein resides in the cilium basal body. Functionally, probable component of the tectonic-like complex (also named MKS complex), a complex localized at the transition zone of primary cilia. Required for ciliary structure and function. The chain is B9 domain-containing protein 1 from Drosophila melanogaster (Fruit fly).